We begin with the raw amino-acid sequence, 290 residues long: 33 kDa chaperonin (290 aa).

Disulfide bonds link cysteine 235–cysteine 237 and cysteine 268–cysteine 271.

This sequence belongs to the HSP33 family. In terms of processing, under oxidizing conditions two disulfide bonds are formed involving the reactive cysteines. Under reducing conditions zinc is bound to the reactive cysteines and the protein is inactive.

Its subcellular location is the cytoplasm. Redox regulated molecular chaperone. Protects both thermally unfolding and oxidatively damaged proteins from irreversible aggregation. Plays an important role in the bacterial defense system toward oxidative stress. In Streptococcus gordonii (strain Challis / ATCC 35105 / BCRC 15272 / CH1 / DL1 / V288), this protein is 33 kDa chaperonin.